The primary structure comprises 214 residues: MASSASRFIKCVTVGDGAVGKTCMLICYTSNKFPTDYIPTVFDNFSANVVVDSTTVNLGLWDTAGQEDYNRLRPLSYRGADVFVLAFSLVSRASYENIMKKWIPELQHYAPGVPIVLVGTKLDLREDKHYLLDHPGMIPVTTAQGEELRKQIGAAYYIECSSKTQQNVKGVFDAAIKVVIQPPTKQREKKKKKSRQGCSMMNMFRGRKMSCFKS.

15-22 (GDGAVGKT) lines the GTP pocket. The short motif at 37–45 (YIPTVFDNF) is the Effector region element. GTP-binding positions include 62–66 (DTAGQ) and 120–123 (TKLD).

It belongs to the small GTPase superfamily. Rho family. In terms of processing, may be palmitoylated.

Its subcellular location is the cytoplasm. The protein resides in the membrane. Its function is as follows. Inactive GDP-bound Rho GTPases reside in the cytosol, are found in a complex with Rho GDP-dissociation inhibitors (Rho GDIs), and are released from the GDI protein in order to translocate to membranes upon activation. The chain is Rac-like GTP-binding protein 3 (RAC3) from Oryza sativa subsp. japonica (Rice).